Here is a 282-residue protein sequence, read N- to C-terminus: MVKHCIDQFCVFGNPINHTQSPYIHSLFSKQTGIVYEYSARLVPFKEFNSYVLNFFLNKGKGANITVPFKENAYVISNNLTIRAKMSRAVNTFKKLHNNKILGDNTDGIGVLHDLKRIKFIKSKFNRVLLIGAGGAARGIIFSLLSYGCSIVVLNRTITRALQLVEDFKNVGSISIFKEKFASNYSFNLIINATTINICQNSNLSTIKSLIHKDVYCYDINYSIKHKYTEFLLWCIKNGAICVSNGIGMLVSQAAHSFYLWYGILPETNSIICKLNRQFYML.

Shikimate-binding positions include 19 to 21 (TQS) and Thr66. Residue Lys70 is the Proton acceptor of the active site. The shikimate site is built by Asn91 and Asp107. NADP(+) contacts are provided by residues 132 to 136 (GAGGA), 155 to 160 (NRTITR), Ile224, and Gly246.

This sequence belongs to the shikimate dehydrogenase family. Homodimer.

The catalysed reaction is shikimate + NADP(+) = 3-dehydroshikimate + NADPH + H(+). Its pathway is metabolic intermediate biosynthesis; chorismate biosynthesis; chorismate from D-erythrose 4-phosphate and phosphoenolpyruvate: step 4/7. Involved in the biosynthesis of the chorismate, which leads to the biosynthesis of aromatic amino acids. Catalyzes the reversible NADPH linked reduction of 3-dehydroshikimate (DHSA) to yield shikimate (SA). This chain is Shikimate dehydrogenase (NADP(+)), found in Buchnera aphidicola subsp. Baizongia pistaciae (strain Bp).